We begin with the raw amino-acid sequence, 375 residues long: MAIVSSKQSPQPDGSKKPSQAKSVKKSVEHSKPQQTDALLQPEAVQEEFVGKQDDKLRPQRFDEYIGQRELKEVLDIAIQATKSRQEALDHLLLYGPPGLGKTTISLILAAELGVNCKVTSAPALERPRDIVGLLVNLQPRDILFIDEIHRLSRMTEELLYPAMEDFRLDITIGKGQSARIRSLPLKPFTLVGATTRVGALTSPLRDRFGFVQRLRFYEADELGQIVLRTADILKAKITSDAAEEVARRSRGTPRIANRLLKRVRDYAEVKHSGEITQTIAQEALELFNVDPCGLDWTDRRLLTVMIEQYNGGPVGVDTLAAATGEDSQTIEEVYEPYLMQIGYLNRTPRGRVATPAAWTHLGYQPPDEQMRLLS.

Polar residues predominate over residues 1 to 22; that stretch reads MAIVSSKQSPQPDGSKKPSQAK. The disordered stretch occupies residues 1–44; the sequence is MAIVSSKQSPQPDGSKKPSQAKSVKKSVEHSKPQQTDALLQPEA. Positions 13–218 are large ATPase domain (RuvB-L); sequence DGSKKPSQAK…FGFVQRLRFY (206 aa). Residues L57, R58, G99, K102, T103, T104, 165 to 167, R208, Y218, and R255 each bind ATP; that span reads EDF. T103 contributes to the Mg(2+) binding site. The segment at 219–289 is small ATPAse domain (RuvB-S); sequence EADELGQIVL…IAQEALELFN (71 aa). A head domain (RuvB-H) region spans residues 292–375; it reads PCGLDWTDRR…PPDEQMRLLS (84 aa). DNA-binding residues include R347 and R352.

The protein belongs to the RuvB family. In terms of assembly, homohexamer. Forms an RuvA(8)-RuvB(12)-Holliday junction (HJ) complex. HJ DNA is sandwiched between 2 RuvA tetramers; dsDNA enters through RuvA and exits via RuvB. An RuvB hexamer assembles on each DNA strand where it exits the tetramer. Each RuvB hexamer is contacted by two RuvA subunits (via domain III) on 2 adjacent RuvB subunits; this complex drives branch migration. In the full resolvosome a probable DNA-RuvA(4)-RuvB(12)-RuvC(2) complex forms which resolves the HJ.

It localises to the cytoplasm. It carries out the reaction ATP + H2O = ADP + phosphate + H(+). Functionally, the RuvA-RuvB-RuvC complex processes Holliday junction (HJ) DNA during genetic recombination and DNA repair, while the RuvA-RuvB complex plays an important role in the rescue of blocked DNA replication forks via replication fork reversal (RFR). RuvA specifically binds to HJ cruciform DNA, conferring on it an open structure. The RuvB hexamer acts as an ATP-dependent pump, pulling dsDNA into and through the RuvAB complex. RuvB forms 2 homohexamers on either side of HJ DNA bound by 1 or 2 RuvA tetramers; 4 subunits per hexamer contact DNA at a time. Coordinated motions by a converter formed by DNA-disengaged RuvB subunits stimulates ATP hydrolysis and nucleotide exchange. Immobilization of the converter enables RuvB to convert the ATP-contained energy into a lever motion, pulling 2 nucleotides of DNA out of the RuvA tetramer per ATP hydrolyzed, thus driving DNA branch migration. The RuvB motors rotate together with the DNA substrate, which together with the progressing nucleotide cycle form the mechanistic basis for DNA recombination by continuous HJ branch migration. Branch migration allows RuvC to scan DNA until it finds its consensus sequence, where it cleaves and resolves cruciform DNA. In Acaryochloris marina (strain MBIC 11017), this protein is Holliday junction branch migration complex subunit RuvB.